The chain runs to 380 residues: MAAPLRKEHPIFRILNSTFVDLPLPSNLSIWWNSGSLLGLCLVVQILTGIFLAMHYTADITLAFSSVMHILRDVNYGWFLRYVHANGVSLFFICMYCHIGRGLYYGSYNKIETWNVGVILFLVTILTAFMGYVLVWGQMSFWAATVITNLVSAIPYIGTIIVQWLWGGFSVDNATLTRFFPFHFLFPFIIAALAVIHLVFLHNSGANNPFAFNSNYDKAPFHIYFTTKDTVGFILLVAALFSLALLFPGALNDPENFIPANPLVTPPHIQPEWYFLFAYAILRSIPNKLGGVIALVAAILVLFLMPLLNTSKNESNSFRPLSQAAFWLLVAHLFILTWIGSQPVEYPYVLLGQVASVLYFSLFIFGFPIVSSIENKIIFS.

Transmembrane regions (helical) follow at residues 34–54 (SGSL…FLAM), 78–99 (WFLR…YCHI), 114–134 (WNVG…GYVL), and 179–199 (FFPF…IHLV). 2 residues coordinate heme b: His-84 and His-98. Heme b contacts are provided by His-183 and His-197. His-202 contacts a ubiquinone. The next 4 helical transmembrane spans lie at 227-247 (TKDT…ALLF), 289-309 (LGGV…PLLN), 321-341 (LSQA…WIGS), and 348-369 (YVLL…GFPI).

The protein belongs to the cytochrome b family. As to quaternary structure, the main subunits of complex b-c1 are: cytochrome b, cytochrome c1 and the Rieske protein. Heme b is required as a cofactor.

The protein localises to the mitochondrion inner membrane. In terms of biological role, component of the ubiquinol-cytochrome c reductase complex (complex III or cytochrome b-c1 complex) that is part of the mitochondrial respiratory chain. The b-c1 complex mediates electron transfer from ubiquinol to cytochrome c. Contributes to the generation of a proton gradient across the mitochondrial membrane that is then used for ATP synthesis. The chain is Cytochrome b (MT-CYB) from Strongylocentrotus purpuratus (Purple sea urchin).